The chain runs to 247 residues: 1-(5-phosphoribosyl)-5-[(5-phosphoribosylamino)methylideneamino] imidazole-4-carboxamide isomerase (247 aa).

The Proton acceptor role is filled by Asp8. Asp129 functions as the Proton donor in the catalytic mechanism.

It belongs to the HisA/HisF family.

It is found in the cytoplasm. The catalysed reaction is 1-(5-phospho-beta-D-ribosyl)-5-[(5-phospho-beta-D-ribosylamino)methylideneamino]imidazole-4-carboxamide = 5-[(5-phospho-1-deoxy-D-ribulos-1-ylimino)methylamino]-1-(5-phospho-beta-D-ribosyl)imidazole-4-carboxamide. Its pathway is amino-acid biosynthesis; L-histidine biosynthesis; L-histidine from 5-phospho-alpha-D-ribose 1-diphosphate: step 4/9. This is 1-(5-phosphoribosyl)-5-[(5-phosphoribosylamino)methylideneamino] imidazole-4-carboxamide isomerase from Rhodospirillum centenum (strain ATCC 51521 / SW).